A 272-amino-acid polypeptide reads, in one-letter code: Putative bark agglutinin LECRPA3 (272 aa).

The signal sequence occupies residues 1–29 (PFNPETVYALLAMLISFFVLLASARKENS). N-linked (GlcNAc...) asparagine glycosylation is found at Asn-36, Asn-39, and Asn-65. Mn(2+)-binding residues include Glu-150 and Asp-152. Residues Asp-152, Tyr-154, Asn-156, and Asp-159 each coordinate Ca(2+). Positions 159 and 164 each coordinate Mn(2+).

The protein belongs to the leguminous lectin family. Homotetramer. In terms of tissue distribution, weak expression in bark. The lectin accumulates in the inner bark in autumn.

Functionally, bark lectins are storage proteins that probably maintain stocks of nitrogen during dormant period. Self-aggregatable molecules that can bind their own carbohydrate side chains. They could also play a role in the plant's defense against phytophagous invertebrates or herbivorous higher animals. The sequence is that of Putative bark agglutinin LECRPA3 from Robinia pseudoacacia (Black locust).